The primary structure comprises 465 residues: ATP synthase subunit beta (465 aa).

ATP is bound at residue 152–159 (GGAGVGKT).

Belongs to the ATPase alpha/beta chains family. F-type ATPases have 2 components, CF(1) - the catalytic core - and CF(0) - the membrane proton channel. CF(1) has five subunits: alpha(3), beta(3), gamma(1), delta(1), epsilon(1). CF(0) has three main subunits: a(1), b(2) and c(9-12). The alpha and beta chains form an alternating ring which encloses part of the gamma chain. CF(1) is attached to CF(0) by a central stalk formed by the gamma and epsilon chains, while a peripheral stalk is formed by the delta and b chains.

Its subcellular location is the cell membrane. The enzyme catalyses ATP + H2O + 4 H(+)(in) = ADP + phosphate + 5 H(+)(out). Functionally, produces ATP from ADP in the presence of a proton gradient across the membrane. The catalytic sites are hosted primarily by the beta subunits. In Desulfitobacterium hafniense (strain Y51), this protein is ATP synthase subunit beta.